A 293-amino-acid polypeptide reads, in one-letter code: ATP synthase gamma chain (293 aa).

Belongs to the ATPase gamma chain family. F-type ATPases have 2 components, CF(1) - the catalytic core - and CF(0) - the membrane proton channel. CF(1) has five subunits: alpha(3), beta(3), gamma(1), delta(1), epsilon(1). CF(0) has three main subunits: a, b and c.

Its subcellular location is the cell inner membrane. Functionally, produces ATP from ADP in the presence of a proton gradient across the membrane. The gamma chain is believed to be important in regulating ATPase activity and the flow of protons through the CF(0) complex. In Allorhizobium ampelinum (strain ATCC BAA-846 / DSM 112012 / S4) (Agrobacterium vitis (strain S4)), this protein is ATP synthase gamma chain.